A 363-amino-acid polypeptide reads, in one-letter code: 3-methyl-D-ornithine--L-lysine ligase (363 aa).

Lys10 serves as a coordination point for ATP. 11–12 (LQ) is an L-lysine binding site. ATP contacts are provided by residues Asp31, 49–50 (DV), and 72–73 (EN). Glu72 contributes to the L-lysine binding site. Residues Lys104, Lys131, Ser138, and 160–163 (EEYV) contribute to the ADP site. Residues 169–171 (SLE) and Asp225 each bind D-ornithine. The Mg(2+) site is built by Glu227, Glu239, and Asp241. Glu239 lines the ADP pocket. D-ornithine-binding positions include 243 to 248 (RFPSQT) and Glu302. 2 residues coordinate L-lysine: Ser246 and Glu302.

Belongs to the PylC family. It depends on Mg(2+) as a cofactor.

It catalyses the reaction (3R)-3-methyl-D-ornithine + L-lysine + ATP = (3R)-3-methyl-D-ornithyl-N(6)-L-lysine + ADP + phosphate + H(+). Its pathway is amino-acid biosynthesis; L-pyrrolysine biosynthesis. In terms of biological role, is required for the biosynthesis of pyrrolysine. Catalyzes the ATP-dependent ligation between (3R)-3-methyl-D-ornithine and L-lysine, leading to (3R)-3-methyl-D-ornithyl-N6-L-lysine. The sequence is that of 3-methyl-D-ornithine--L-lysine ligase from Methanosarcina barkeri (strain Fusaro / DSM 804).